A 748-amino-acid chain; its full sequence is Antigen peptide transporter 1 (748 aa).

Residues 1–15 (MASSRCPAPRGCRCL) lie on the Cytoplasmic side of the membrane. A helical transmembrane segment spans residues 16-36 (PGASLAWLGTVLLFLADWVLL). Topologically, residues 37 to 53 (RTALPRIFSLLVPTALP) are lumenal. A helical transmembrane segment spans residues 54 to 76 (LLRVWAVGLSRWAVLWLGACGVL). Residues 77–92 (RATVGSKSENAGAQGW) are Cytoplasmic-facing. Residues 93-113 (LAALEPLAAALGLALPGLALF) traverse the membrane as a helical segment. Residues 114-133 (RELISWGAPGSADSTRLLHW) are Lumenal-facing. Residues 134 to 154 (GSHPSAFVVSYAAALPAAALW) traverse the membrane as a helical segment. Residues 155–186 (HKLGSLWVPGGQGGSGNPVRRLLGCLGSETRR) lie on the Cytoplasmic side of the membrane. The helical transmembrane segment at 187 to 207 (LSLFLVLVVLSSLGEMAIPFF) threads the bilayer. Positions 187-470 (LSLFLVLVVL…LLSIYPRVQK (284 aa)) constitute an ABC transmembrane type-1 domain. The Lumenal portion of the chain corresponds to 208–227 (TGRLTDWILQDGSADTFTRN). A helical transmembrane segment spans residues 228 to 248 (LTLMSILTIASAVLEFVGDGI). Residues 249-298 (YNNTMGHVHSHLQGEVFGAVLRQETEFFQQNQTGNITSRVTEDTSTLSDS) are Cytoplasmic-facing. The helical transmembrane segment at 299 to 319 (LSENLSLFLWYLVRGLCLLGI) threads the bilayer. Topologically, residues 320-328 (MLWGSVSLT) are lumenal. A helical membrane pass occupies residues 329–349 (MVTLVTLPLLFLLPKKVGKWY). Over 350–418 (QLLEVQVRES…AVNSWTTSIS (69 aa)) the chain is Cytoplasmic. Positions 375–420 (PTVRSFANEEGEAQKFREKLQEIKTLNQKEAVAYAVNSWTTSISGM) are part of the peptide-binding site. A helical transmembrane segment spans residues 419–439 (GMLLKVGILYIGGQLVTSGAV). At 440–443 (SSGN) the chain is on the lumenal side. The chain crosses the membrane as a helical span at residues 444 to 464 (LVTFVLYQMQFTQAVEVLLSI). Positions 453–487 (QFTQAVEVLLSIYPRVQKAVGSSEKIFEYLDRTPR) are part of the peptide-binding site. At 465-748 (YPRVQKAVGS…MVQAPADAPE (284 aa)) the chain is on the cytoplasmic side. The ABC transporter domain maps to 503–742 (VQFQDVSFAY…KGCYWAMVQA (240 aa)). ATP contacts are provided by residues 538 to 546 (GPNGSGKST), 641 to 647 (SQLSGGQ), and glutamine 701. Serine 545 contributes to the Mg(2+) binding site.

The protein belongs to the ABC transporter superfamily. ABCB family. MHC peptide exporter (TC 3.A.1.209) subfamily. Heterodimer of TAP1 and TAP2 (TAP1-TAP2). A component of the peptide loading complex (PLC), interacts via TAPBP with MHCI heterodimer; this interaction mediates peptide-MHCI assembly. Interacts with PSMB5 and PSMB8. Mg(2+) is required as a cofactor.

The protein localises to the endoplasmic reticulum membrane. The catalysed reaction is a peptide antigen(in) + ATP + H2O = a peptide antigen(out) + ADP + phosphate + H(+). Its function is as follows. ABC transporter associated with antigen processing. In complex with TAP2 mediates unidirectional translocation of peptide antigens from cytosol to endoplasmic reticulum (ER) for loading onto MHC class I (MHCI) molecules. Uses the chemical energy of ATP to export peptides against the concentration gradient. During the transport cycle alternates between 'inward-facing' state with peptide binding site facing the cytosol to 'outward-facing' state with peptide binding site facing the ER lumen. Peptide antigen binding to ATP-loaded TAP1-TAP2 induces a switch to hydrolysis-competent 'outward-facing' conformation ready for peptide loading onto nascent MHCI molecules. Subsequently ATP hydrolysis resets the transporter to the 'inward facing' state for a new cycle. As a component of the peptide loading complex (PLC), acts as a molecular scaffold essential for peptide-MHCI assembly and antigen presentation. The polypeptide is Antigen peptide transporter 1 (TAP1) (Gorilla gorilla gorilla (Western lowland gorilla)).